A 33-amino-acid polypeptide reads, in one-letter code: Photosystem II reaction center protein Psb30 (33 aa).

Residues 5-25 form a helical membrane-spanning segment; sequence VIAQLTVLALIVASGPLVIAL.

This sequence belongs to the Psb30/Ycf12 family. PSII is composed of 1 copy each of membrane proteins PsbA, PsbB, PsbC, PsbD, PsbE, PsbF, PsbH, PsbI, PsbJ, PsbK, PsbL, PsbM, PsbT, PsbX, PsbY, PsbZ, Psb30/Ycf12, peripheral proteins of the oxygen-evolving complex and a large number of cofactors. It forms dimeric complexes.

Its subcellular location is the plastid. The protein localises to the chloroplast thylakoid membrane. Functionally, a core subunit of photosystem II (PSII), probably helps stabilize the reaction center. This chain is Photosystem II reaction center protein Psb30, found in Marchantia polymorpha (Common liverwort).